Consider the following 90-residue polypeptide: Interferon alpha-inducible protein 27-like protein 2A (90 aa).

The signal sequence occupies residues 1-24; the sequence is MLGTLFGSAIGGALAVAGAPVALA. 2 consecutive transmembrane segments (helical) span residues 28-48 and 67-89; these read FTGT…AAAI and GVLG…VGAL.

This sequence belongs to the IFI6/IFI27 family. Homodimer. Interacts with SKP2. Interacts with NR4A1. May interact with BCL2.

It localises to the nucleus inner membrane. May be involved in the interferon-induced negative regulation of the transcriptional activity of NR4A1, NR4A2 and NR4A3 through the enhancement of XPO1-mediated nuclear export of these nuclear receptors. Through the regulation of NR4A1 transcriptional activity, may play a role in the vascular response to injury. This chain is Interferon alpha-inducible protein 27-like protein 2A, found in Mus musculus (Mouse).